A 465-amino-acid polypeptide reads, in one-letter code: Cysteine--tRNA ligase (465 aa).

Position 27 (Cys27) interacts with Zn(2+). The short motif at 29–39 (PTVYNFFHIGN) is the 'HIGH' region element. Residues Cys207, His232, and Glu236 each coordinate Zn(2+). Positions 264 to 268 (KMSKS) match the 'KMSKS' region motif. Residue Lys267 participates in ATP binding.

Belongs to the class-I aminoacyl-tRNA synthetase family. As to quaternary structure, monomer. The cofactor is Zn(2+).

The protein localises to the cytoplasm. It catalyses the reaction tRNA(Cys) + L-cysteine + ATP = L-cysteinyl-tRNA(Cys) + AMP + diphosphate. The chain is Cysteine--tRNA ligase from Clostridium kluyveri (strain NBRC 12016).